The sequence spans 249 residues: Coproheme decarboxylase (249 aa).

Fe-coproporphyrin III is bound by residues Arg-131, 145–149, His-172, and Gln-185; that span reads YPMDK. Tyr-145 is an active-site residue.

The protein belongs to the ChdC family. Type 1 subfamily. Fe-coproporphyrin III serves as cofactor.

It catalyses the reaction Fe-coproporphyrin III + 2 H2O2 + 2 H(+) = heme b + 2 CO2 + 4 H2O. The catalysed reaction is Fe-coproporphyrin III + H2O2 + H(+) = harderoheme III + CO2 + 2 H2O. The enzyme catalyses harderoheme III + H2O2 + H(+) = heme b + CO2 + 2 H2O. It functions in the pathway porphyrin-containing compound metabolism; protoheme biosynthesis. Involved in coproporphyrin-dependent heme b biosynthesis. Catalyzes the decarboxylation of Fe-coproporphyrin III (coproheme) to heme b (protoheme IX), the last step of the pathway. The reaction occurs in a stepwise manner with a three-propionate intermediate. In Staphylococcus haemolyticus (strain JCSC1435), this protein is Coproheme decarboxylase.